A 295-amino-acid chain; its full sequence is Pyrroline-5-carboxylate reductase (295 aa).

The protein belongs to the pyrroline-5-carboxylate reductase family.

Its subcellular location is the cytoplasm. It carries out the reaction L-proline + NADP(+) = (S)-1-pyrroline-5-carboxylate + NADPH + 2 H(+). The catalysed reaction is L-proline + NAD(+) = (S)-1-pyrroline-5-carboxylate + NADH + 2 H(+). The protein operates within amino-acid biosynthesis; L-proline biosynthesis; L-proline from L-glutamate 5-semialdehyde: step 1/1. Functionally, catalyzes the reduction of 1-pyrroline-5-carboxylate (PCA) to L-proline. This chain is Pyrroline-5-carboxylate reductase, found in Mycobacterium tuberculosis (strain CDC 1551 / Oshkosh).